The primary structure comprises 154 residues: MPQLATICYIDNGKELLMLHRNKKPNDVHEGKWIGVGGKLERGETPQECAVREILEETGLKAKPVLKGVITFPEFTPDLDWYTYVFKVTEFEGDLIDCNEGMLEWVPYDEVLSKPTWEGDHTFVEWLLEDKPFFSAKFVYDGDKLLDTQVDFYE.

Residues Met1 to Glu129 form the Nudix hydrolase domain. Mg(2+) is bound by residues Gly38, Glu53, Glu56, and Glu57. Residues Gly38–Gly59 carry the Nudix box motif.

Belongs to the Nudix hydrolase family. Homotrimer. It depends on Mg(2+) as a cofactor.

The enzyme catalyses 8-oxo-dGTP + H2O = 8-oxo-dGMP + diphosphate + H(+). Functionally, involved in the DNA repair system to avoid A.T to G.C transversions. Degrades 8-oxo-dGTP to the monophosphate, but is also active on all of the nucleoside triphosphates. The sequence is that of 8-oxo-dGTP diphosphatase (mutX) from Streptococcus pneumoniae (strain ATCC BAA-255 / R6).